A 124-amino-acid chain; its full sequence is Ribonuclease pancreatic (124 aa).

Basic and acidic residues predominate over residues 1–13 (KETAAAKFERQHM). A disordered region spans residues 1 to 24 (KETAAAKFERQHMDSSTSSASSSN). Residues Lys7 and Arg10 each coordinate substrate. His12 serves as the catalytic Proton acceptor. Disulfide bonds link Cys26-Cys84, Cys40-Cys95, Cys58-Cys110, and Cys65-Cys72. Substrate is bound by residues 41–45 (KPVBT), Lys66, and Arg85. His119 serves as the catalytic Proton donor.

Belongs to the pancreatic ribonuclease family. In terms of assembly, monomer. Interacts with and forms tight 1:1 complexes with RNH1. Dimerization of two such complexes may occur. Interaction with RNH1 inhibits this protein. Pancreas.

It localises to the secreted. It carries out the reaction an [RNA] containing cytidine + H2O = an [RNA]-3'-cytidine-3'-phosphate + a 5'-hydroxy-ribonucleotide-3'-[RNA].. It catalyses the reaction an [RNA] containing uridine + H2O = an [RNA]-3'-uridine-3'-phosphate + a 5'-hydroxy-ribonucleotide-3'-[RNA].. Endonuclease that catalyzes the cleavage of RNA on the 3' side of pyrimidine nucleotides. Acts on single-stranded and double-stranded RNA. In Boselaphus tragocamelus (Nilgai), this protein is Ribonuclease pancreatic (RNASE1).